Here is a 402-residue protein sequence, read N- to C-terminus: Protein DesVIII (402 aa).

The protein belongs to the cytochrome P450 family. As to quaternary structure, forms a complex with DesVII.

It functions in the pathway antibiotic biosynthesis. Involved in the biosynthesis of the macrolide antibiotics methymycin, neomethymycin, narbomycin, and pikromycin. DesVIII assists the folding of the DesVII polypeptide. However, unlike chaperones, it remains bound to DesVII during catalysis, forming a tight DesVII/DesVIII complex. Although the formation of the DesVII/DesVIII complex is essential for the catalytic activity, DesVIII is unlikely to be involved in catalysis directly. The sequence is that of Protein DesVIII from Streptomyces venezuelae.